The primary structure comprises 238 residues: 1-(5-phosphoribosyl)-5-[(5-phosphoribosylamino)methylideneamino] imidazole-4-carboxamide isomerase (238 aa).

Residue Asp8 is the Proton acceptor of the active site. Asp130 acts as the Proton donor in catalysis.

The protein belongs to the HisA/HisF family.

The protein resides in the cytoplasm. The enzyme catalyses 1-(5-phospho-beta-D-ribosyl)-5-[(5-phospho-beta-D-ribosylamino)methylideneamino]imidazole-4-carboxamide = 5-[(5-phospho-1-deoxy-D-ribulos-1-ylimino)methylamino]-1-(5-phospho-beta-D-ribosyl)imidazole-4-carboxamide. Its pathway is amino-acid biosynthesis; L-histidine biosynthesis; L-histidine from 5-phospho-alpha-D-ribose 1-diphosphate: step 4/9. The polypeptide is 1-(5-phosphoribosyl)-5-[(5-phosphoribosylamino)methylideneamino] imidazole-4-carboxamide isomerase (Methanococcus maripaludis (strain C7 / ATCC BAA-1331)).